A 222-amino-acid polypeptide reads, in one-letter code: UPF0441 protein CKO_04429 (222 aa).

Over residues 177–194 the composition is skewed to low complexity; that stretch reads TVPKTAMAPKPATTTTVT. The interval 177-222 is disordered; it reads TVPKTAMAPKPATTTTVTRGGFGESVAKQSTMQRSATGTSNRSMGG. Polar residues predominate over residues 203–222; it reads AKQSTMQRSATGTSNRSMGG.

It belongs to the UPF0441 family.

This Citrobacter koseri (strain ATCC BAA-895 / CDC 4225-83 / SGSC4696) protein is UPF0441 protein CKO_04429.